The primary structure comprises 496 residues: Transcription termination/antitermination protein NusA (496 aa).

Residues 135-200 form the S1 motif domain; it reads GQIITGIVKK…RGAQLFISRS (66 aa). The KH domain occupies 302 to 370; it reads CHTMDIAVDI…KNLNINENII (69 aa). 2 consecutive repeat copies span residues 364–414 and 440–490. Residues 364–490 are 2 X 51 AA approximate repeats; sequence NINENIIKIL…LLIMTARNIC (127 aa).

Belongs to the NusA family. As to quaternary structure, monomer. Binds directly to the core enzyme of the DNA-dependent RNA polymerase and to nascent RNA.

The protein resides in the cytoplasm. Its function is as follows. Participates in both transcription termination and antitermination. This chain is Transcription termination/antitermination protein NusA, found in Buchnera aphidicola subsp. Acyrthosiphon pisum (strain APS) (Acyrthosiphon pisum symbiotic bacterium).